A 519-amino-acid polypeptide reads, in one-letter code: cAMP-dependent protein kinase catalytic subunit (519 aa).

Positions 1–195 (MLPDTGILSP…SQTLQKAENA (195 aa)) are disordered. Polar residues-rich tracts occupy residues 10 to 25 (PFTT…SQTL), 116 to 159 (VTPS…TSPI), and 173 to 191 (TPVN…TLQK). Residues 208–463 (FNFQRTLGTG…SRSVLEHPWF (256 aa)) enclose the Protein kinase domain. Residues 214-222 (LGTGSFGRV) and lysine 237 each bind ATP. Catalysis depends on aspartate 331, which acts as the Proton acceptor. Positions 464-519 (AEVNWERLLSKQIEPPYVPPVRGGIGDASLFDKYPEETEEYGKDGPDQYGHFFTDF) constitute an AGC-kinase C-terminal domain.

This sequence belongs to the protein kinase superfamily. Ser/Thr protein kinase family.

It catalyses the reaction L-seryl-[protein] + ATP = O-phospho-L-seryl-[protein] + ADP + H(+). The enzyme catalyses L-threonyl-[protein] + ATP = O-phospho-L-threonyl-[protein] + ADP + H(+). Activated by cAMP. In terms of biological role, functions downstream of adenylate cyclase to regulate trap-development for nematode capture. This is cAMP-dependent protein kinase catalytic subunit from Arthrobotrys oligospora (strain ATCC 24927 / CBS 115.81 / DSM 1491) (Nematode-trapping fungus).